The chain runs to 316 residues: Ornithine carbamoyltransferase (316 aa).

Residues 59–62 (STRT), Gln86, Arg110, and 137–140 (HPCQ) each bind carbamoyl phosphate. L-ornithine contacts are provided by residues Asn168, Asp232, and 236–237 (SM). Carbamoyl phosphate is bound by residues 273–274 (CL) and Arg301.

The protein belongs to the aspartate/ornithine carbamoyltransferase superfamily. OTCase family.

Its subcellular location is the cytoplasm. The enzyme catalyses carbamoyl phosphate + L-ornithine = L-citrulline + phosphate + H(+). It functions in the pathway amino-acid biosynthesis; L-arginine biosynthesis; L-arginine from L-ornithine and carbamoyl phosphate: step 1/3. Its function is as follows. Reversibly catalyzes the transfer of the carbamoyl group from carbamoyl phosphate (CP) to the N(epsilon) atom of ornithine (ORN) to produce L-citrulline. The chain is Ornithine carbamoyltransferase from Listeria monocytogenes serotype 4b (strain F2365).